Reading from the N-terminus, the 147-residue chain is Holdfast attachment protein A (147 aa).

Involved in attachment of the holdfast to the cell. The holdfast is a structure that allows the bacteria to firmly adheres to surfaces. This chain is Holdfast attachment protein A (hfaA), found in Caulobacter vibrioides (strain ATCC 19089 / CIP 103742 / CB 15) (Caulobacter crescentus).